A 295-amino-acid chain; its full sequence is 4-hydroxy-tetrahydrodipicolinate synthase (295 aa).

Residue T48 coordinates pyruvate. Y135 serves as the catalytic Proton donor/acceptor. The Schiff-base intermediate with substrate role is filled by K163. V204 contributes to the pyruvate binding site.

Belongs to the DapA family. In terms of assembly, homotetramer; dimer of dimers.

Its subcellular location is the cytoplasm. The enzyme catalyses L-aspartate 4-semialdehyde + pyruvate = (2S,4S)-4-hydroxy-2,3,4,5-tetrahydrodipicolinate + H2O + H(+). It participates in amino-acid biosynthesis; L-lysine biosynthesis via DAP pathway; (S)-tetrahydrodipicolinate from L-aspartate: step 3/4. Its function is as follows. Catalyzes the condensation of (S)-aspartate-beta-semialdehyde [(S)-ASA] and pyruvate to 4-hydroxy-tetrahydrodipicolinate (HTPA). The sequence is that of 4-hydroxy-tetrahydrodipicolinate synthase from Francisella tularensis subsp. novicida (strain U112).